A 74-amino-acid polypeptide reads, in one-letter code: NAD(P)H-quinone oxidoreductase subunit O (74 aa).

The protein belongs to the complex I NdhO subunit family. As to quaternary structure, NDH-1 can be composed of about 15 different subunits; different subcomplexes with different compositions have been identified which probably have different functions.

The protein resides in the cellular thylakoid membrane. The catalysed reaction is a plastoquinone + NADH + (n+1) H(+)(in) = a plastoquinol + NAD(+) + n H(+)(out). It carries out the reaction a plastoquinone + NADPH + (n+1) H(+)(in) = a plastoquinol + NADP(+) + n H(+)(out). Its function is as follows. NDH-1 shuttles electrons from an unknown electron donor, via FMN and iron-sulfur (Fe-S) centers, to quinones in the respiratory and/or the photosynthetic chain. The immediate electron acceptor for the enzyme in this species is believed to be plastoquinone. Couples the redox reaction to proton translocation, and thus conserves the redox energy in a proton gradient. Cyanobacterial NDH-1 also plays a role in inorganic carbon-concentration. The chain is NAD(P)H-quinone oxidoreductase subunit O from Synechococcus sp. (strain RCC307).